Consider the following 336-residue polypeptide: Glycerol-3-phosphate dehydrogenase [NAD(P)+] (336 aa).

Positions 14, 15, 35, 36, and 109 each coordinate NADPH. Residues Lys-109 and Gly-139 each contribute to the sn-glycerol 3-phosphate site. Ala-143 is an NADPH binding site. Sn-glycerol 3-phosphate-binding residues include Lys-194, Asp-247, Ser-257, Arg-258, and Asn-259. Lys-194 functions as the Proton acceptor in the catalytic mechanism. Arg-258 serves as a coordination point for NADPH. Glu-284 lines the NADPH pocket.

Belongs to the NAD-dependent glycerol-3-phosphate dehydrogenase family.

It localises to the cytoplasm. The catalysed reaction is sn-glycerol 3-phosphate + NAD(+) = dihydroxyacetone phosphate + NADH + H(+). It carries out the reaction sn-glycerol 3-phosphate + NADP(+) = dihydroxyacetone phosphate + NADPH + H(+). The protein operates within membrane lipid metabolism; glycerophospholipid metabolism. Functionally, catalyzes the reduction of the glycolytic intermediate dihydroxyacetone phosphate (DHAP) to sn-glycerol 3-phosphate (G3P), the key precursor for phospholipid synthesis. This Streptomyces avermitilis (strain ATCC 31267 / DSM 46492 / JCM 5070 / NBRC 14893 / NCIMB 12804 / NRRL 8165 / MA-4680) protein is Glycerol-3-phosphate dehydrogenase [NAD(P)+].